The following is a 397-amino-acid chain: uncharacterized protein (397 aa).

Positions 8, 14, 17, and 95 each coordinate [4Fe-4S] cluster. S-adenosyl-L-methionine contacts are provided by glutamine 229, tyrosine 258, glutamate 279, and aspartate 325. Catalysis depends on cysteine 352, which acts as the Nucleophile.

Belongs to the class I-like SAM-binding methyltransferase superfamily. RNA M5U methyltransferase family.

This is an uncharacterized protein from Chlamydia muridarum (strain MoPn / Nigg).